We begin with the raw amino-acid sequence, 203 residues long: LexA repressor (203 aa).

The segment at residues 30–50 (VREICQAVSLKSTSTVHGHLK) is a DNA-binding region (H-T-H motif). Residues S127 and K164 each act as for autocatalytic cleavage activity in the active site.

This sequence belongs to the peptidase S24 family. In terms of assembly, homodimer.

It catalyses the reaction Hydrolysis of Ala-|-Gly bond in repressor LexA.. Its function is as follows. Represses a number of genes involved in the response to DNA damage (SOS response), including recA and lexA. In the presence of single-stranded DNA, RecA interacts with LexA causing an autocatalytic cleavage which disrupts the DNA-binding part of LexA, leading to derepression of the SOS regulon and eventually DNA repair. The chain is LexA repressor from Clostridium perfringens (strain ATCC 13124 / DSM 756 / JCM 1290 / NCIMB 6125 / NCTC 8237 / Type A).